Reading from the N-terminus, the 108-residue chain is UPF0060 membrane protein Nham_2004 (108 aa).

4 helical membrane passes run 5-25 (AAYVGAAVAEIAGCFAFWAWL), 31-51 (VWWLAPGMVSLALFAYLLTLV), 61-81 (AAYGGVYIIASLGWLWSVEGL), and 88-108 (LTGAAICLLGAAIILFGPRQI).

The protein belongs to the UPF0060 family.

It is found in the cell inner membrane. This Nitrobacter hamburgensis (strain DSM 10229 / NCIMB 13809 / X14) protein is UPF0060 membrane protein Nham_2004.